A 76-amino-acid polypeptide reads, in one-letter code: KANTR integral membrane protein (76 aa).

An N-terminal signal peptide occupies residues 1 to 25; the sequence is MSPFSLLILVICAFSLFFLINLTRG. Topologically, residues 26-34 are extracellular; the sequence is LSILLVFSK. Residues 35 to 55 form a helical membrane-spanning segment; sequence NQLLALLLLSIVSLFSISLIS. The Cytoplasmic segment spans residues 56–76; that stretch reads ALIFFDLLPSTFFGFILLFFF.

Its subcellular location is the membrane. This Homo sapiens (Human) protein is KANTR integral membrane protein.